The following is a 165-amino-acid chain: uncharacterized protein (165 aa).

Helical transmembrane passes span 6-26, 28-48, 54-74, 78-98, 110-130, and 138-158; these read ILFP…SGQA, LFSG…AFVY, AVTP…HFFA, WVWW…SLLV, AVSM…MAWL, and ALLK…LLLI.

It is found in the cell membrane. This is an uncharacterized protein from Bacillus subtilis (strain 168).